The sequence spans 337 residues: Cytoskeleton protein RodZ (337 aa).

Topologically, residues 1-111 are cytoplasmic; the sequence is MNTEATHDQN…LGKRRKKRDG (111 aa). In terms of domain architecture, HTH cro/C1-type spans 19–71; it reads LRNAREQLGLSQQAVAERLCLKVSTVRDIEEDKAPADLASTFLRGYIRSYARL. The H-T-H motif DNA-binding region spans 30 to 49; sequence QQAVAERLCLKVSTVRDIEE. Residues 112-132 form a helical; Signal-anchor for type II membrane protein membrane-spanning segment; sequence WLMTFTWLVLFVVIGLSGAWW. Residues 133–337 are Periplasmic-facing; the sequence is WQDHKAQQEE…TLNAEQSPAQ (205 aa). The segment covering 145–167 has biased composition (polar residues); the sequence is TMADQSSAELSSNSEQGQSVPLN. A disordered region spans residues 145–220; sequence TMADQSSAEL…VSPSQANVDT (76 aa). Residues 168 to 207 are compositionally biased toward low complexity; sequence TSTTTDPATTSTPPASVDTTATNTQTPAVTAPAPAVDPQQ. Residues 208–218 show a composition bias toward polar residues; sequence NAVVSPSQANV.

This sequence belongs to the RodZ family.

The protein resides in the cell inner membrane. Its function is as follows. Cytoskeletal protein that is involved in cell-shape control through regulation of the length of the long axis. The polypeptide is Cytoskeleton protein RodZ (Escherichia coli O17:K52:H18 (strain UMN026 / ExPEC)).